We begin with the raw amino-acid sequence, 213 residues long: StAR-related lipid transfer protein 5 (213 aa).

An START domain is found at 1–213; it reads MDPALAAQMS…LQKAVKQFHE (213 aa).

May be involved in the intracellular transport of sterols or other lipids. May bind cholesterol or other sterols. This chain is StAR-related lipid transfer protein 5 (STARD5), found in Homo sapiens (Human).